The chain runs to 41 residues: Putative toxic protein TimP (41 aa).

A membrane pass occupies residues 1–17 (MKIRCFCIVLIVSGALL).

This sequence belongs to the TimP toxin family.

It localises to the cell inner membrane. Putative toxic component of a potential type I toxin-antitoxin (TA) system. Neutralized by sRNA antitoxin TimR which binds to the 5' UTR of timP mRNA and inhibits translation. The antitoxin gene is encoded immediately upstream and transcribed divergently from the toxin gene; antitoxin RNA is less stable than timP mRNA. The protein is Putative toxic protein TimP of Escherichia coli (strain K12).